We begin with the raw amino-acid sequence, 231 residues long: Large ribosomal subunit protein uL1 (231 aa).

The protein belongs to the universal ribosomal protein uL1 family. As to quaternary structure, part of the 50S ribosomal subunit.

Binds directly to 23S rRNA. The L1 stalk is quite mobile in the ribosome, and is involved in E site tRNA release. Functionally, protein L1 is also a translational repressor protein, it controls the translation of the L11 operon by binding to its mRNA. The sequence is that of Large ribosomal subunit protein uL1 from Pseudomonas putida (strain ATCC 700007 / DSM 6899 / JCM 31910 / BCRC 17059 / LMG 24140 / F1).